The sequence spans 427 residues: Inward rectifier potassium channel 2 (427 aa).

The Cytoplasmic portion of the chain corresponds to 1–81; that stretch reads MGSVRTNRYS…IFTTCVDIRW (81 aa). Position 76 is an S-nitrosocysteine (Cys76). Residues 82–106 form a helical membrane-spanning segment; the sequence is RWMLVIFCLAFVLSWLFFGCVFWLI. Over 107–128 the chain is Extracellular; the sequence is ALLHGDLDASKESKACVSEVNS. The helical; Pore-forming intramembrane region spans 129–140; the sequence is FTAAFLFSIETQ. Positions 141–147 form an intramembrane region, pore-forming; it reads TTIGYGF. A Selectivity filter motif is present at residues 142-147; it reads TIGYGF. At 148 to 156 the chain is on the extracellular side; it reads RCVTDECPI. The chain crosses the membrane as a helical span at residues 157 to 178; that stretch reads AVFMVVFQSIVGCIIDAFIIGA. The Cytoplasmic portion of the chain corresponds to 179-427; sequence VMAKMAKPKK…PRPLRRESEI (249 aa). The segment at 181-208 is polyphosphoinositide (PIP2)-binding; the sequence is AKMAKPKKRNETLVFSHNAVIAMRDGKL. The disordered stretch occupies residues 383-427; it reads TSKEEEDSENGVPESTSTDSPPGIDLHNQASVPLEPRPLRRESEI. A PDZ-binding motif is present at residues 425–427; that stretch reads SEI.

Belongs to the inward rectifier-type potassium channel (TC 1.A.2.1) family. KCNJ2 subfamily. Homotetramer. Homomultimeric and heteromultimeric association with KCNJ4/Kir2.3. Can form heteromeric channels with Kir2.6/KCNJ18. Associates, via its PDZ-recognition domain, with a complex containing LIN7A, LIN7B, LIN7C, DLG1, CASK and APBA1. S-nitrosylation increases the open probability and inward rectifying currents. As to expression, prominently expressed in the central nervous system. Also found in other excitable tissues such as heart and skeletal muscle.

The protein localises to the cell membrane. The protein resides in the sarcolemma. It is found in the T-tubule. It catalyses the reaction K(+)(in) = K(+)(out). Its activity is regulated as follows. Activated by phosphatidylinositol 4,5 biphosphate (PtdIns(4,5)P2). Its function is as follows. Inward rectifier potassium channels are characterized by a greater tendency to allow potassium to flow into the cell rather than out of it. Their voltage dependence is regulated by the concentration of extracellular potassium; as external potassium is raised, the voltage range of the channel opening shifts to more positive voltages. The inward rectification is mainly due to the blockage of outward current by internal magnesium. Can be blocked by extracellular barium and cesium. Probably participates in establishing action potential waveform and excitability of neuronal and muscle tissues. This is Inward rectifier potassium channel 2 (Kcnj2) from Rattus norvegicus (Rat).